We begin with the raw amino-acid sequence, 302 residues long: MTSRSPFSTIPLSMNQDSYQTRTTVGIRKKTFSERACQFMEQAETFMAPFTPYMPLLGRFLIVATYFEDAIRIVTQWPEQVSYMRDYRRFRFGTAPLLLFVCVVLMLVGSTLVVFKKRQAYAIGSLLFVTLLQAFAYGLITSGEMFFRNMSVIGGLCLVASDTFIHRRINRFAGLPAVSEHNKRTYFQLAGRVLLIFMFLGLLAKEGSGISWTRILVHILSVTACAMVVIGFKAKFFAAVLVLILSVANFIINSFWSVPRESPYRDFYRYDFFQTLSIVGGLLYLVNTGPGKFSVDEKKKIY.

Transmembrane regions (helical) follow at residues 95–115 (APLL…LVVF), 120–140 (AYAI…YGLI), 193–213 (VLLI…ISWT), 215–235 (ILVH…FKAK), 236–256 (FFAA…NSFW), and 271–291 (DFFQ…TGPG). Residues 299–302 (KKIY) carry the Di-lysine motif motif.

Belongs to the SURF4 family.

It is found in the endoplasmic reticulum membrane. The protein is Surfeit locus protein 4 homolog of Schizosaccharomyces pombe (strain 972 / ATCC 24843) (Fission yeast).